We begin with the raw amino-acid sequence, 164 residues long: Phosphopantetheine adenylyltransferase (164 aa).

S9 is a binding site for substrate. Residues 9-10 (SF) and H17 contribute to the ATP site. Residues K41, L73, and K87 each coordinate substrate. Residues 88–90 (GLR), E98, and 123–129 (YSYISSS) each bind ATP.

Belongs to the bacterial CoaD family. As to quaternary structure, homohexamer. Mg(2+) is required as a cofactor.

Its subcellular location is the cytoplasm. It catalyses the reaction (R)-4'-phosphopantetheine + ATP + H(+) = 3'-dephospho-CoA + diphosphate. It functions in the pathway cofactor biosynthesis; coenzyme A biosynthesis; CoA from (R)-pantothenate: step 4/5. Reversibly transfers an adenylyl group from ATP to 4'-phosphopantetheine, yielding dephospho-CoA (dPCoA) and pyrophosphate. The sequence is that of Phosphopantetheine adenylyltransferase from Clostridium perfringens (strain ATCC 13124 / DSM 756 / JCM 1290 / NCIMB 6125 / NCTC 8237 / Type A).